The following is a 299-amino-acid chain: Putative hydrolase YtaP (299 aa).

It belongs to the dienelactone hydrolase family.

The sequence is that of Putative hydrolase YtaP (ytaP) from Bacillus subtilis (strain 168).